Consider the following 429-residue polypeptide: UDP-N-acetylglucosamine 1-carboxyvinyltransferase (429 aa).

K22–N23 serves as a coordination point for phosphoenolpyruvate. R102 serves as a coordination point for UDP-N-acetyl-alpha-D-glucosamine. C126 acts as the Proton donor in catalysis. At C126 the chain carries 2-(S-cysteinyl)pyruvic acid O-phosphothioketal. UDP-N-acetyl-alpha-D-glucosamine is bound by residues R131 to L135, D316, and I338.

Belongs to the EPSP synthase family. MurA subfamily.

The protein localises to the cytoplasm. It carries out the reaction phosphoenolpyruvate + UDP-N-acetyl-alpha-D-glucosamine = UDP-N-acetyl-3-O-(1-carboxyvinyl)-alpha-D-glucosamine + phosphate. Its pathway is cell wall biogenesis; peptidoglycan biosynthesis. Its function is as follows. Cell wall formation. Adds enolpyruvyl to UDP-N-acetylglucosamine. The sequence is that of UDP-N-acetylglucosamine 1-carboxyvinyltransferase from Methylobacterium nodulans (strain LMG 21967 / CNCM I-2342 / ORS 2060).